Consider the following 809-residue polypeptide: H(+)/Cl(-) exchange transporter 7 (809 aa).

The Cytoplasmic segment spans residues 1-130 (MANVSKKVSW…TAFRTVEIKR (130 aa)). Phosphoserine occurs at positions 9 and 64. The next 2 membrane-spanning stretches (helical) occupy residues 131–163 (WVICAMVGILTGLVACFIDIVVEKLAGLKYRLV) and 178–201 (FSLLLWAALNAAFVLLGSTIVAFI). Residues 207–211 (GSGIP) carry the Selectivity filter part_1 motif. S208 is a chloride binding site. Positions 210 to 217 (IPQIKCFL) form an intramembrane region, helical. A run of 2 helical transmembrane segments spans residues 227 to 245 (RLKTLVIKVSGVILSVVGG) and 251 to 268 (EGPMIHSGSVIAAGISQG). The Selectivity filter part_2 motif lies at 249–253 (GKEGP). Intramembrane regions (helical) lie at residues 292 to 304 (FVSAGAAAGVSAA) and 308 to 316 (PVGGVLFSL). The next 5 membrane-spanning stretches (helical) occupy residues 326–345 (FLTWRIFFASMISTFTLNFV), 379–409 (IPIFIAMGVVGGILGAVFNALNYWLTMFRIR), 414–436 (PCLQVVEATLVAAVTATAAFVLI), 491–511 (PMTLGLFTLVYFFLACWTYGL), and 516–539 (GVFIPSLLIGAAWGRLFGISLSYI). The short motif at 516–520 (GVFIP) is the Selectivity filter part_3 element. F518 serves as a coordination point for chloride. The segment at residues 549-563 (GKYALMGAAAQLGGI) is an intramembrane region (helical). The note=Loop between two helices intramembrane region spans 564-566 (VRM). Positions 567-578 (TLSLTVIMMEAT) form an intramembrane region, helical. Positions 579 to 582 (SSVT) form an intramembrane region, note=Loop between two helices. Residues 583-601 (YGFPIMLVLMTAKIVGDVF) form a helical membrane-spanning segment. The Cytoplasmic segment spans residues 602–809 (IEGLYDMHIQ…GLEELSLAQT (208 aa)). Y606 contacts chloride. CBS domains are found at residues 635 to 699 (MSTP…VFVE) and 745 to 803 (MNPS…GLEE). ATP is bound by residues 662–664 (HNG) and 787–790 (TRKD). S805 is subject to Phosphoserine.

This sequence belongs to the chloride channel (TC 2.A.49) family. ClC-7/CLCN7 subfamily. As to quaternary structure, chloride channel 7 are heteromers of alpha (CLCN7) and beta (OSTM1) subunits.

It localises to the lysosome membrane. The enzyme catalyses 2 chloride(in) + H(+)(out) = 2 chloride(out) + H(+)(in). In terms of biological role, slowly voltage-gated channel mediating the exchange of chloride ions against protons. Functions as antiporter and contributes to the acidification of the lysosome lumen and may be involved in maintaining lysosomal pH. The CLC channel family contains both chloride channels and proton-coupled anion transporters that exchange chloride or another anion for protons. The presence of conserved gating glutamate residues is typical for family members that function as antiporters. This chain is H(+)/Cl(-) exchange transporter 7 (CLCN7), found in Bos taurus (Bovine).